Consider the following 145-residue polypeptide: Large ribosomal subunit protein uL15 (145 aa).

Residues 1-52 (MFNLLKPKGASKRRKIVGRGPGSGLGKTSGRGQKGQKARNTSPRLGFEGGQT) form a disordered region. Residues 19–33 (RGPGSGLGKTSGRGQ) are compositionally biased toward gly residues.

Belongs to the universal ribosomal protein uL15 family. Part of the 50S ribosomal subunit.

Functionally, binds to the 23S rRNA. The sequence is that of Large ribosomal subunit protein uL15 from Borreliella burgdorferi (strain ATCC 35210 / DSM 4680 / CIP 102532 / B31) (Borrelia burgdorferi).